Reading from the N-terminus, the 170-residue chain is Photosystem I assembly protein Ycf3 (170 aa).

TPR repeat units lie at residues 35–68 (AFTY…EIDP), 72–105 (SYIL…NPFL), and 120–153 (GEQA…TPGN).

This sequence belongs to the Ycf3 family.

It is found in the plastid. It localises to the chloroplast thylakoid membrane. Functionally, essential for the assembly of the photosystem I (PSI) complex. May act as a chaperone-like factor to guide the assembly of the PSI subunits. This chain is Photosystem I assembly protein Ycf3, found in Agrostis stolonifera (Creeping bentgrass).